Here is a 354-residue protein sequence, read N- to C-terminus: tRNA N6-adenosine threonylcarbamoyltransferase (354 aa).

Residues histidine 111 and histidine 115 each contribute to the Fe cation site. Substrate is bound by residues 134–138 (LVSGG), aspartate 167, glycine 180, and asparagine 279. Aspartate 319 is a Fe cation binding site.

This sequence belongs to the KAE1 / TsaD family. The cofactor is Fe(2+).

The protein resides in the cytoplasm. It catalyses the reaction L-threonylcarbamoyladenylate + adenosine(37) in tRNA = N(6)-L-threonylcarbamoyladenosine(37) in tRNA + AMP + H(+). Required for the formation of a threonylcarbamoyl group on adenosine at position 37 (t(6)A37) in tRNAs that read codons beginning with adenine. Is involved in the transfer of the threonylcarbamoyl moiety of threonylcarbamoyl-AMP (TC-AMP) to the N6 group of A37, together with TsaE and TsaB. TsaD likely plays a direct catalytic role in this reaction. The chain is tRNA N6-adenosine threonylcarbamoyltransferase from Neisseria meningitidis serogroup A / serotype 4A (strain DSM 15465 / Z2491).